The primary structure comprises 119 residues: Autophagy-related protein 8 (119 aa).

The Phosphatidylethanolamine amidated glycine moiety is linked to residue Gly-116. A propeptide spans 117–119 (removed in mature form); sequence EAL.

This sequence belongs to the ATG8 family. Conjugation to phosphatidylethanolamine (PE) leads to homodimerization. Interacts with ATG1, ATG3, ATG4, ATG7 and ATG12. Post-translationally, the C-terminal Glu-117, Ala-118 and Leu-119 residues of ATG8 are removed by ATG4 to expose Gly-116 at the C-terminus. This Gly-116 forms then a thioester bond with ATG7 (E1-like activating enzyme) before being transferred to ATG3 (the specific E2 conjugating enzyme), in order to be finally amidated with phosphatidylethanolamine. This lipid modification anchors ATG8 to membranes and can be reversed by ATG4, releasing soluble ATG8.

The protein resides in the cytoplasmic vesicle. It is found in the cvt vesicle membrane. The protein localises to the autophagosome membrane. Its subcellular location is the vacuole membrane. Functionally, ubiquitin-like modifier involved in cytoplasm to vacuole transport (Cvt) vesicles and autophagosome formation. With ATG4, mediates the delivery of the vesicles and autophagosomes to the vacuole via the microtubule cytoskeleton. Required for selective autophagic degradation of the nucleus (nucleophagy) as well as for mitophagy which contributes to regulate mitochondrial quantity and quality by eliminating the mitochondria to a basal level to fulfill cellular energy requirements and preventing excess ROS production. Also participates in membrane fusion events that take place in the early secretory pathway. Also involved in endoplasmic reticulum-specific autophagic process and is essential for the survival of cells subjected to severe ER stress. The ATG8-PE conjugate mediates tethering between adjacent membranes and stimulates membrane hemifusion, leading to expansion of the autophagosomal membrane during autophagy. Moreover not only conjugation, but also subsequent ATG8-PE deconjugation is an important step required to facilitate multiple events during macroautophagy, and especially for efficient autophagosome biogenesis, the assembly of ATG9-containing tubulovesicular clusters into phagophores/autophagosomes, and for the disassembly of PAS-associated ATG components. Autophagy is required for conidiation, aerial mycelial growth, and pseudothecia formation, but not for host invasion. The polypeptide is Autophagy-related protein 8 (Cochliobolus heterostrophus (strain C4 / ATCC 48331 / race T) (Southern corn leaf blight fungus)).